A 452-amino-acid chain; its full sequence is Pup--protein ligase (452 aa).

Glutamate 9 provides a ligand contact to Mg(2+). Position 53 (arginine 53) interacts with ATP. Tyrosine 55 contacts Mg(2+). Aspartate 57 functions as the Proton acceptor in the catalytic mechanism. Residue glutamate 63 participates in Mg(2+) binding. ATP contacts are provided by threonine 66 and tryptophan 419.

It belongs to the Pup ligase/Pup deamidase family. Pup-conjugating enzyme subfamily.

The enzyme catalyses ATP + [prokaryotic ubiquitin-like protein]-L-glutamate + [protein]-L-lysine = ADP + phosphate + N(6)-([prokaryotic ubiquitin-like protein]-gamma-L-glutamyl)-[protein]-L-lysine.. The protein operates within protein degradation; proteasomal Pup-dependent pathway. It functions in the pathway protein modification; protein pupylation. Catalyzes the covalent attachment of the prokaryotic ubiquitin-like protein modifier Pup to the proteasomal substrate proteins, thereby targeting them for proteasomal degradation. This tagging system is termed pupylation. The ligation reaction involves the side-chain carboxylate of the C-terminal glutamate of Pup and the side-chain amino group of a substrate lysine. In Mycobacterium sp. (strain JLS), this protein is Pup--protein ligase.